The sequence spans 63 residues: 2-hydroxymuconate tautomerase (63 aa).

The Proton acceptor; via imino nitrogen role is filled by P2.

It belongs to the 4-oxalocrotonate tautomerase family. Homohexamer.

The enzyme catalyses (2Z,4E)-2-hydroxyhexa-2,4-dienedioate = (3E)-2-oxohex-3-enedioate. It functions in the pathway xenobiotic degradation; toluene degradation. Its pathway is xenobiotic degradation; xylene degradation. In terms of biological role, catalyzes the ketonization of 2-hydroxymuconate stereoselectively to yield 2-oxo-3-hexenedioate. The polypeptide is 2-hydroxymuconate tautomerase (xylH) (Pseudomonas putida (Arthrobacter siderocapsulatus)).